A 218-amino-acid polypeptide reads, in one-letter code: Elongation factor Ts (218 aa).

The involved in Mg(2+) ion dislocation from EF-Tu stretch occupies residues 82–85; sequence TDFV.

It belongs to the EF-Ts family.

Its subcellular location is the cytoplasm. Associates with the EF-Tu.GDP complex and induces the exchange of GDP to GTP. It remains bound to the aminoacyl-tRNA.EF-Tu.GTP complex up to the GTP hydrolysis stage on the ribosome. This chain is Elongation factor Ts, found in Prochlorococcus marinus (strain MIT 9312).